Consider the following 282-residue polypeptide: Probable septum site-determining protein MinC (282 aa).

The disordered stretch occupies residues 108–127 (AAARSADEESANAAAAAPAA). Positions 118–127 (ANAAAAAPAA) are enriched in low complexity.

The protein belongs to the MinC family. In terms of assembly, interacts with MinD and FtsZ.

Functionally, cell division inhibitor that blocks the formation of polar Z ring septums. Rapidly oscillates between the poles of the cell to destabilize FtsZ filaments that have formed before they mature into polar Z rings. Prevents FtsZ polymerization. The protein is Probable septum site-determining protein MinC of Paraburkholderia xenovorans (strain LB400).